The following is a 532-amino-acid chain: Autoinducer-2 kinase (532 aa).

This sequence belongs to the FGGY kinase family.

The protein localises to the cytoplasm. It carries out the reaction (S)-4,5-dihydroxypentane-2,3-dione + ATP = (2S)-2-hydroxy-3,4-dioxopentyl phosphate + ADP + H(+). Its function is as follows. Catalyzes the phosphorylation of autoinducer-2 (AI-2) to phospho-AI-2, which subsequently inactivates the transcriptional regulator LsrR and leads to the transcription of the lsr operon. Phosphorylates the ring-open form of (S)-4,5-dihydroxypentane-2,3-dione (DPD), which is the precursor to all AI-2 signaling molecules, at the C5 position. The protein is Autoinducer-2 kinase of Klebsiella pneumoniae subsp. pneumoniae (strain ATCC 700721 / MGH 78578).